The following is a 182-amino-acid chain: Helofensin-3 (182 aa).

The N-terminal stretch at 1-26 is a signal peptide; that stretch reads MQMDWLFIAVISGIGLLSSGVPGTQG. The stretch at 27–64 is one C(6)C(4)C(9)C(6)CC 1; approximate repeat; the sequence is AYTTEQCRALNGSCNFYACFPKNVIIGKCDWWGWSCCA. The stretch at 65–101 is one C(6)C(4)C(9)C(6)CC 2; approximate repeat; the sequence is RTPLERCTAKKGTCTKTGCTKTDTDHGPCDGGAQCCQ. A C(6)C(4)C(9)C(6)CC 3; approximate repeat occupies 102–138; it reads RDPVKYCKFHGNVCGRGKCPMDHIPIGECTPGYPCCK. The stretch at 139 to 176 is one C(6)C(4)C(9)C(6)CC 4; approximate repeat; sequence RDGPAYCKSKGGKCLNRCPQIVPTNVIGVCATGVPCCK.

Belongs to the beta-defensin family. Helofensin subfamily. As to expression, expressed by the mandibular venom gland.

It is found in the secreted. In terms of biological role, lethal toxin which possesses an inhibitory effect on direct electrical stimulation of the isolated hemi-diaphragm of mice. Neither hemorrhagic nor hemolytic activities are detected. Phospholipase A2 activity, proteolytic activity and arginine esterolytic activity are absent. In Heloderma suspectum cinctum (Banded Gila monster), this protein is Helofensin-3.